The following is a 364-amino-acid chain: tRNA-specific 2-thiouridylase MnmA 1 (364 aa).

ATP-binding positions include 11-18 (GMSGGTDS) and phenylalanine 37. Cysteine 96 functions as the Nucleophile in the catalytic mechanism. An intrachain disulfide couples cysteine 96 to cysteine 193. Glycine 120 serves as a coordination point for ATP. Residues 142 to 144 (KDQ) form an interaction with tRNA region. Cysteine 193 serves as the catalytic Cysteine persulfide intermediate. An interaction with tRNA region spans residues 309–310 (RY).

It belongs to the MnmA/TRMU family.

The protein resides in the cytoplasm. It catalyses the reaction S-sulfanyl-L-cysteinyl-[protein] + uridine(34) in tRNA + AH2 + ATP = 2-thiouridine(34) in tRNA + L-cysteinyl-[protein] + A + AMP + diphosphate + H(+). Catalyzes the 2-thiolation of uridine at the wobble position (U34) of tRNA, leading to the formation of s(2)U34. This Bacteroides fragilis (strain ATCC 25285 / DSM 2151 / CCUG 4856 / JCM 11019 / LMG 10263 / NCTC 9343 / Onslow / VPI 2553 / EN-2) protein is tRNA-specific 2-thiouridylase MnmA 1.